The following is a 364-amino-acid chain: Anthranilate phosphoribosyltransferase (364 aa).

5-phospho-alpha-D-ribose 1-diphosphate-binding positions include G101, G104–D105, T109, N111–T114, K129–S137, and G141. G101 contributes to the anthranilate binding site. Mg(2+) is bound at residue S113. Residue N132 participates in anthranilate binding. Anthranilate is bound at residue R187. Residues D245 and E246 each coordinate Mg(2+).

The protein belongs to the anthranilate phosphoribosyltransferase family. In terms of assembly, homodimer. Mg(2+) is required as a cofactor.

The catalysed reaction is N-(5-phospho-beta-D-ribosyl)anthranilate + diphosphate = 5-phospho-alpha-D-ribose 1-diphosphate + anthranilate. It functions in the pathway amino-acid biosynthesis; L-tryptophan biosynthesis; L-tryptophan from chorismate: step 2/5. Catalyzes the transfer of the phosphoribosyl group of 5-phosphorylribose-1-pyrophosphate (PRPP) to anthranilate to yield N-(5'-phosphoribosyl)-anthranilate (PRA). The polypeptide is Anthranilate phosphoribosyltransferase (Mycolicibacterium vanbaalenii (strain DSM 7251 / JCM 13017 / BCRC 16820 / KCTC 9966 / NRRL B-24157 / PYR-1) (Mycobacterium vanbaalenii)).